We begin with the raw amino-acid sequence, 830 residues long: ATP-dependent DNA helicase chl-1 (830 aa).

The Helicase ATP-binding domain maps to 1 to 403; the sequence is MDEFSFPFQP…HNLLYMKQLE (403 aa). Position 35–42 (35–42) interacts with ATP; it reads SPTGTGKS. Basic and acidic residues-rich tracts occupy residues 124-140 and 157-168; these read GMVEVSRKRKAPARDTD and NDEKSEKQRDSD. Residues 124-173 are disordered; that stretch reads GMVEVSRKRKAPARDTDQFLEPQDEAAPSEEYNNDEKSEKQRDSDFFDDV. [4Fe-4S] cluster is bound by residues Cys222, Cys240, Cys272, and Cys308. The short motif at 351-354 is the DEAH box element; that stretch reads DEAH.

The protein belongs to the DEAD box helicase family. DEAH subfamily. DDX11/CHL1 sub-subfamily. Requires [4Fe-4S] cluster as cofactor.

It localises to the nucleus. The enzyme catalyses Couples ATP hydrolysis with the unwinding of duplex DNA at the replication fork by translocating in the 5'-3' direction. This creates two antiparallel DNA single strands (ssDNA). The leading ssDNA polymer is the template for DNA polymerase III holoenzyme which synthesizes a continuous strand.. It catalyses the reaction ATP + H2O = ADP + phosphate + H(+). Functionally, required for normal cell proliferation and chromosome stability. Plays a role in DNA repair during replication. This Caenorhabditis elegans protein is ATP-dependent DNA helicase chl-1.